The chain runs to 361 residues: Protein-L-isoaspartate O-methyltransferase domain-containing protein 2 (361 aa).

Glycine 2 carries N-myristoyl glycine lipidation. Serine 64 is a catalytic residue. 3 adoMet binding motif regions span residues 85 to 94 (LNLGSGTGYL), 160 to 164 (YDRVY), and 181 to 191 (LKVGGILVMPL). The tract at residues 240-250 (VRSLQDLARIA) is BC-box. Polar residues predominate over residues 303–312 (SNPSDDNSSG). The disordered stretch occupies residues 303-335 (SNPSDDNSSGDLEEERREEEATTPPDAKPEPPV). A CUL-box region spans residues 345 to 348 (LPLP).

It belongs to the methyltransferase superfamily. L-isoaspartyl/D-aspartyl protein methyltransferase family.

It is found in the cytoplasm. In terms of biological role, may act as a substrate recognition component of an ECS (Elongin BC-CUL5-SOCS-box protein) E3 ubiquitin ligase complex which mediates the ubiquitination and subsequent proteasomal degradation of target proteins. May bind to the methyltransferase cofactor S-adenosylmethionine (AdoMet) via the N-terminal AdoMet binding motif, but probably does not display methyltransferase activity. The polypeptide is Protein-L-isoaspartate O-methyltransferase domain-containing protein 2 (PCMTD2) (Bos taurus (Bovine)).